The primary structure comprises 130 residues: Small ribosomal subunit protein uS9 (130 aa).

It belongs to the universal ribosomal protein uS9 family.

This chain is Small ribosomal subunit protein uS9, found in Cupriavidus taiwanensis (strain DSM 17343 / BCRC 17206 / CCUG 44338 / CIP 107171 / LMG 19424 / R1) (Ralstonia taiwanensis (strain LMG 19424)).